Reading from the N-terminus, the 552-residue chain is Protein psiB (552 aa).

The N-terminal stretch at 1-18 (MKLLSVLITFLLATVIYS) is a signal peptide. An N-linked (GlcNAc...) asparagine glycan is attached at N60. The 142-residue stretch at 114-255 (TYDTTRNIYV…EDYCGVCQGD (142 aa)) folds into the PA14 domain. Residues N281, N313, N340, N365, N446, N472, and N521 are each glycosylated (N-linked (GlcNAc...) asparagine).

The protein belongs to the prespore-cell-inducing factor family.

It is found in the secreted. This is Protein psiB (psiB) from Dictyostelium discoideum (Social amoeba).